Reading from the N-terminus, the 72-residue chain is Translation initiation factor IF-1 (72 aa).

The region spanning 1-72 is the S1-like domain; it reads MAKEDCIEMQ…SKARIIFRAR (72 aa).

It belongs to the IF-1 family. In terms of assembly, component of the 30S ribosomal translation pre-initiation complex which assembles on the 30S ribosome in the order IF-2 and IF-3, IF-1 and N-formylmethionyl-tRNA(fMet); mRNA recruitment can occur at any time during PIC assembly.

The protein localises to the cytoplasm. In terms of biological role, one of the essential components for the initiation of protein synthesis. Stabilizes the binding of IF-2 and IF-3 on the 30S subunit to which N-formylmethionyl-tRNA(fMet) subsequently binds. Helps modulate mRNA selection, yielding the 30S pre-initiation complex (PIC). Upon addition of the 50S ribosomal subunit IF-1, IF-2 and IF-3 are released leaving the mature 70S translation initiation complex. The chain is Translation initiation factor IF-1 from Haemophilus ducreyi (strain 35000HP / ATCC 700724).